Reading from the N-terminus, the 754-residue chain is 5-methyltetrahydropteroyltriglutamate--homocysteine methyltransferase (754 aa).

5-methyltetrahydropteroyltri-L-glutamate-binding positions include 17-20 and K117; that span reads RELK. L-homocysteine contacts are provided by residues 431-433 and E484; that span reads IGS. L-methionine contacts are provided by residues 431–433 and E484; that span reads IGS. 5-methyltetrahydropteroyltri-L-glutamate-binding positions include 515–516 and W561; that span reads RC. D599 serves as a coordination point for L-homocysteine. D599 is a binding site for L-methionine. Residue E605 coordinates 5-methyltetrahydropteroyltri-L-glutamate. The Zn(2+) site is built by H641, C643, and E665. The Proton donor role is filled by H694. C726 is a Zn(2+) binding site.

Belongs to the vitamin-B12 independent methionine synthase family. Zn(2+) is required as a cofactor.

The catalysed reaction is 5-methyltetrahydropteroyltri-L-glutamate + L-homocysteine = tetrahydropteroyltri-L-glutamate + L-methionine. Its pathway is amino-acid biosynthesis; L-methionine biosynthesis via de novo pathway; L-methionine from L-homocysteine (MetE route): step 1/1. Functionally, catalyzes the transfer of a methyl group from 5-methyltetrahydrofolate to homocysteine resulting in methionine formation. The protein is 5-methyltetrahydropteroyltriglutamate--homocysteine methyltransferase of Klebsiella pneumoniae subsp. pneumoniae (strain ATCC 700721 / MGH 78578).